Here is a 472-residue protein sequence, read N- to C-terminus: Siroheme synthase 1 (472 aa).

The segment at 1-203 is precorrin-2 dehydrogenase /sirohydrochlorin ferrochelatase; the sequence is MDYLPLFADL…GQLAQAEEEL (203 aa). NAD(+) is bound by residues 22–23 and 43–44; these read EV and QT. Ser128 is subject to Phosphoserine. A uroporphyrinogen-III C-methyltransferase region spans residues 215–472; that stretch reads GEVALVGAGP…AISPSVVNLA (258 aa). Residue Pro224 participates in S-adenosyl-L-methionine binding. Asp247 acts as the Proton acceptor in catalysis. Lys269 acts as the Proton donor in catalysis. S-adenosyl-L-methionine contacts are provided by residues 300–302, Ile305, 330–331, Met382, and Gly411; these read GGD and TA.

It in the N-terminal section; belongs to the precorrin-2 dehydrogenase / sirohydrochlorin ferrochelatase family. The protein in the C-terminal section; belongs to the precorrin methyltransferase family.

The catalysed reaction is uroporphyrinogen III + 2 S-adenosyl-L-methionine = precorrin-2 + 2 S-adenosyl-L-homocysteine + H(+). It catalyses the reaction precorrin-2 + NAD(+) = sirohydrochlorin + NADH + 2 H(+). The enzyme catalyses siroheme + 2 H(+) = sirohydrochlorin + Fe(2+). It functions in the pathway cofactor biosynthesis; adenosylcobalamin biosynthesis; precorrin-2 from uroporphyrinogen III: step 1/1. The protein operates within cofactor biosynthesis; adenosylcobalamin biosynthesis; sirohydrochlorin from precorrin-2: step 1/1. It participates in porphyrin-containing compound metabolism; siroheme biosynthesis; precorrin-2 from uroporphyrinogen III: step 1/1. Its pathway is porphyrin-containing compound metabolism; siroheme biosynthesis; siroheme from sirohydrochlorin: step 1/1. It functions in the pathway porphyrin-containing compound metabolism; siroheme biosynthesis; sirohydrochlorin from precorrin-2: step 1/1. Its function is as follows. Multifunctional enzyme that catalyzes the SAM-dependent methylations of uroporphyrinogen III at position C-2 and C-7 to form precorrin-2 via precorrin-1. Then it catalyzes the NAD-dependent ring dehydrogenation of precorrin-2 to yield sirohydrochlorin. Finally, it catalyzes the ferrochelation of sirohydrochlorin to yield siroheme. This chain is Siroheme synthase 1, found in Yersinia enterocolitica serotype O:8 / biotype 1B (strain NCTC 13174 / 8081).